The chain runs to 103 residues: Large ribosomal subunit protein bL21 (103 aa).

Belongs to the bacterial ribosomal protein bL21 family. As to quaternary structure, part of the 50S ribosomal subunit. Contacts protein L20.

In terms of biological role, this protein binds to 23S rRNA in the presence of protein L20. This Azotobacter vinelandii (strain DJ / ATCC BAA-1303) protein is Large ribosomal subunit protein bL21.